The chain runs to 480 residues: tRNA (guanine(37)-N(1))-methyltransferase (480 aa).

The transit peptide at 1–18 directs the protein to the mitochondrion; it reads MAAVWRRSARLFILLQRH. S-adenosyl-L-methionine-binding positions include His273, 311–312, 339–340, and Asn367; these read DL and DG. The interval 458 to 480 is disordered; the sequence is HTQDRDTSEEPCPKKQKCEDSTN.

It belongs to the class I-like SAM-binding methyltransferase superfamily. TRM5/TYW2 family. Monomer.

It is found in the mitochondrion matrix. The protein resides in the nucleus. Its subcellular location is the cytoplasm. The enzyme catalyses guanosine(37) in tRNA + S-adenosyl-L-methionine = N(1)-methylguanosine(37) in tRNA + S-adenosyl-L-homocysteine + H(+). Functionally, involved in mitochondrial tRNA methylation. Specifically methylates the N1 position of guanosine-37 in various tRNAs. Methylation is not dependent on the nature of the nucleoside 5' of the target nucleoside. This is the first step in the biosynthesis of wybutosine (yW), a modified base adjacent to the anticodon of tRNAs and required for accurate decoding. The chain is tRNA (guanine(37)-N(1))-methyltransferase (trmt5) from Danio rerio (Zebrafish).